A 150-amino-acid polypeptide reads, in one-letter code: uncharacterized protein (150 aa).

Residues 1–19 are compositionally biased toward low complexity; the sequence is MNDDSSSSSSGDSSDGSSG. Disordered regions lie at residues 1 to 21 and 85 to 131; these read MNDD…SGTT and EPEA…AYPE. The segment covering 106-115 has biased composition (pro residues); that stretch reads RPPPTEPPTV.

This is an uncharacterized protein from Schizosaccharomyces pombe (strain 972 / ATCC 24843) (Fission yeast).